Consider the following 356-residue polypeptide: Protein HEXIM1 (356 aa).

Basic and acidic residues-rich tracts occupy residues 1 to 11 (MAEPLLTEHQH) and 24 to 47 (VHEE…DSRW). Residues 1 to 162 (MAEPLLTEHQ…RPSKKKRHWK (162 aa)) form a disordered region. Over residues 48 to 58 (QSRASLQSGSR) the composition is skewed to polar residues. Basic and acidic residues predominate over residues 84–93 (SLEKGEKGQN). Phosphoserine is present on residues Ser98 and Ser103. Residues 145–162 (LGKKKHRRRPSKKKRHWK) show a composition bias toward basic residues. Residues 147 to 174 (KKKHRRRPSKKKRHWKPYYKLTWEEKKK) form a basic region; mediates nuclear localization and interaction with 7SK snRNA and NR3C1 region. The interval 199–202 (PYNT) is interaction with P-TEFb. An autoinhibitory acidic region; in absence of 7SK snRNA interacts with the basic region preventing interaction with P-TEFb and modulating subcellular localization region spans residues 207-247 (MDDHDQEEPDLKTGLYPKRAAAKSDDTSDEDFVEEAGEEDG). A disordered region spans residues 210 to 259 (HDQEEPDLKTGLYPKRAAAKSDDTSDEDFVEEAGEEDGGSDGMGGDGSEF). At Ser230 the chain carries Phosphoserine. Thr233 carries the post-translational modification Phosphothreonine. The span at 233–248 (TSDEDFVEEAGEEDGG) shows a compositional bias: acidic residues. Residues Ser234, Ser249, and Ser257 each carry the phosphoserine modification. Residues 280 to 346 (SKQELIKEYL…LTENELHRQQ (67 aa)) are a coiled coil. Residues 283–311 (ELIKEYLELEKCLSRKEDENNRLRLESKR) are mediates interaction with CCNT1. Residues 307 to 352 (LESKRLGGVDARVRELELELDRLRAENLQLLTENELHRQQERAPLS) are required for inhibition of ESR1-dependent transcription.

This sequence belongs to the HEXIM family. In terms of assembly, homooligomer and heterooligomer with HEXIM2; probably dimeric. Core component of the 7SK RNP complex, at least composed of 7SK RNA, LARP7, MEPCE, HEXIM1 (or HEXIM2) and P-TEFb (composed of CDK9 and CCNT1/cyclin-T1). Interacts with the N-CoR complex through NCOR1. Interacts with ESR1 and NR3C1. May interact with NF-kappa-B through RELA. Interacts with CCNT2; mediates formation of a tripartite complex with KPNA2. Part of the HDP-RNP complex composed of at least HEXIM1, PRKDC, XRCC5, XRCC6, paraspeckle proteins (SFPQ, NONO, PSPC1, RBM14, and MATR3) and NEAT1 non-coding RNA. In terms of tissue distribution, widely expressed with higher expression in heart, skeletal muscle and brain (at protein level).

It is found in the nucleus. Its subcellular location is the cytoplasm. In terms of biological role, transcriptional regulator which functions as a general RNA polymerase II transcription inhibitor. Core component of the 7SK RNP complex: in cooperation with 7SK snRNA sequesters P-TEFb in a large inactive 7SK snRNP complex preventing RNA polymerase II phosphorylation and subsequent transcriptional elongation. May also regulate NF-kappa-B, ESR1, NR3C1 and CIITA-dependent transcriptional activity. Plays a role in the regulation of DNA virus-mediated innate immune response by assembling into the HDP-RNP complex, a complex that serves as a platform for IRF3 phosphorylation and subsequent innate immune response activation through the cGAS-STING pathway. The chain is Protein HEXIM1 (Hexim1) from Mus musculus (Mouse).